The chain runs to 237 residues: Large ribosomal subunit protein uL1 (237 aa).

Belongs to the universal ribosomal protein uL1 family. As to quaternary structure, part of the 50S ribosomal subunit.

Its function is as follows. Binds directly to 23S rRNA. The L1 stalk is quite mobile in the ribosome, and is involved in E site tRNA release. Functionally, protein L1 is also a translational repressor protein, it controls the translation of the L11 operon by binding to its mRNA. The chain is Large ribosomal subunit protein uL1 from Corynebacterium kroppenstedtii (strain DSM 44385 / JCM 11950 / CIP 105744 / CCUG 35717).